The following is a 269-amino-acid chain: Cytochrome c oxidase subunit 3 (269 aa).

Helical transmembrane passes span 24 to 44 (FYNS…MHGF), 46 to 66 (NMYI…TLWF), 90 to 110 (GVGL…WTFF), 132 to 152 (IDPF…GVTV), 167 to 187 (ALYG…FQGI), 207 to 227 (FSTG…SVGL), and 247 to 267 (ILYW…IYFW).

It belongs to the cytochrome c oxidase subunit 3 family. As to quaternary structure, component of the cytochrome c oxidase (complex IV, CIV), a multisubunit enzyme composed of a catalytic core of 3 subunits and several supernumerary subunits. The complex exists as a monomer or a dimer and forms supercomplexes (SCs) in the inner mitochondrial membrane with ubiquinol-cytochrome c oxidoreductase (cytochrome b-c1 complex, complex III, CIII).

Its subcellular location is the mitochondrion inner membrane. The catalysed reaction is 4 Fe(II)-[cytochrome c] + O2 + 8 H(+)(in) = 4 Fe(III)-[cytochrome c] + 2 H2O + 4 H(+)(out). Component of the cytochrome c oxidase, the last enzyme in the mitochondrial electron transport chain which drives oxidative phosphorylation. The respiratory chain contains 3 multisubunit complexes succinate dehydrogenase (complex II, CII), ubiquinol-cytochrome c oxidoreductase (cytochrome b-c1 complex, complex III, CIII) and cytochrome c oxidase (complex IV, CIV), that cooperate to transfer electrons derived from NADH and succinate to molecular oxygen, creating an electrochemical gradient over the inner membrane that drives transmembrane transport and the ATP synthase. Cytochrome c oxidase is the component of the respiratory chain that catalyzes the reduction of oxygen to water. Electrons originating from reduced cytochrome c in the intermembrane space (IMS) are transferred via the dinuclear copper A center (CU(A)) of subunit 2 and heme A of subunit 1 to the active site in subunit 1, a binuclear center (BNC) formed by heme A3 and copper B (CU(B)). The BNC reduces molecular oxygen to 2 water molecules using 4 electrons from cytochrome c in the IMS and 4 protons from the mitochondrial matrix. This is Cytochrome c oxidase subunit 3 (COXIII) from Trichophyton rubrum (Athlete's foot fungus).